The chain runs to 469 residues: 3-isopropylmalate dehydratase large subunit (469 aa).

[4Fe-4S] cluster contacts are provided by Cys347, Cys407, and Cys410.

It belongs to the aconitase/IPM isomerase family. LeuC type 1 subfamily. In terms of assembly, heterodimer of LeuC and LeuD. It depends on [4Fe-4S] cluster as a cofactor.

It catalyses the reaction (2R,3S)-3-isopropylmalate = (2S)-2-isopropylmalate. The protein operates within amino-acid biosynthesis; L-leucine biosynthesis; L-leucine from 3-methyl-2-oxobutanoate: step 2/4. Its function is as follows. Catalyzes the isomerization between 2-isopropylmalate and 3-isopropylmalate, via the formation of 2-isopropylmaleate. This is 3-isopropylmalate dehydratase large subunit from Prochlorococcus marinus (strain NATL2A).